A 718-amino-acid polypeptide reads, in one-letter code: Methionine--tRNA ligase (718 aa).

The 'HIGH' region motif lies at P27–H37. Residues C158, C161, C171, and C174 each coordinate Zn(2+). The 'KMSKS' region motif lies at K348–S352. Residue K351 coordinates ATP. The 107-residue stretch at D612 to K718 folds into the tRNA-binding domain.

Belongs to the class-I aminoacyl-tRNA synthetase family. MetG type 1 subfamily. Homodimer. Zn(2+) is required as a cofactor.

The protein localises to the cytoplasm. The enzyme catalyses tRNA(Met) + L-methionine + ATP = L-methionyl-tRNA(Met) + AMP + diphosphate. In terms of biological role, is required not only for elongation of protein synthesis but also for the initiation of all mRNA translation through initiator tRNA(fMet) aminoacylation. The chain is Methionine--tRNA ligase from Burkholderia orbicola (strain AU 1054).